We begin with the raw amino-acid sequence, 275 residues long: Undecaprenyl-diphosphatase (275 aa).

8 helical membrane-spanning segments follow: residues 4–24 (LNVI…WLPI), 44–64 (AFMD…VVVL), 85–105 (WTLW…GFPL), 113–133 (LMQN…FIVI), 149–169 (TLPW…IIPG), 188–208 (FVGA…VSIL), 226–246 (IILL…IKFL), and 255–275 (FKVF…AMFL).

It belongs to the UppP family.

The protein resides in the cell membrane. The catalysed reaction is di-trans,octa-cis-undecaprenyl diphosphate + H2O = di-trans,octa-cis-undecaprenyl phosphate + phosphate + H(+). Its function is as follows. Catalyzes the dephosphorylation of undecaprenyl diphosphate (UPP). Confers resistance to bacitracin. The polypeptide is Undecaprenyl-diphosphatase (Latilactobacillus sakei subsp. sakei (strain 23K) (Lactobacillus sakei subsp. sakei)).